A 138-amino-acid polypeptide reads, in one-letter code: Large ribosomal subunit protein uL16 (138 aa).

Over residues 1-16 the composition is skewed to basic residues; the sequence is MLIPRRVKHRKQHHPG. Residues 1-25 form a disordered region; it reads MLIPRRVKHRKQHHPGRSGQATGGT.

Belongs to the universal ribosomal protein uL16 family. Part of the 50S ribosomal subunit.

Binds 23S rRNA and is also seen to make contacts with the A and possibly P site tRNAs. This is Large ribosomal subunit protein uL16 from Renibacterium salmoninarum (strain ATCC 33209 / DSM 20767 / JCM 11484 / NBRC 15589 / NCIMB 2235).